A 127-amino-acid chain; its full sequence is uncharacterized protein (127 aa).

Residues 1 to 17 (MQGSVQIQKGNISSSYT) show a composition bias toward polar residues. The tract at residues 1-36 (MQGSVQIQKGNISSSYTPEKHPSHPTSANGSMSPKR) is disordered.

This is an uncharacterized protein from Treponema pallidum (strain Nichols).